We begin with the raw amino-acid sequence, 994 residues long: Receptor-like protein 6 (994 aa).

Residues 1–25 (MTGLYSSMSFFLRTIVLLFSTSSFC) form the signal peptide. Topologically, residues 26–946 (NTFASLTQDS…SSSSSSEEDE (921 aa)) are extracellular. 3 N-linked (GlcNAc...) asparagine glycosylation sites follow: Asn-116, Asn-134, and Asn-154. LRR repeat units lie at residues 122-146 (LQHL…EFSK), 148-171 (MRLE…LLQL), 174-199 (LVSL…LFLH), 205-228 (FMNL…EFSY), 230-253 (WSLR…VLLI), 254-278 (PNLE…LRNN), 280-301 (LLKL…ISNL), 302-325 (KHLT…LRSL), 326-349 (SHLS…VSNL), 350-373 (KQLT…LLNL), 375-397 (QLRY…ISQL), 398-421 (SNLE…LFNI), 423-445 (SLTT…NISL), 446-471 (LHNL…VFLS), 477-497 (SLAL…SEFS), 498-520 (SHLE…IRNQ), 521-544 (RNLS…LWRL), 546-569 (ELST…ALSG), and 571-595 (KIVM…GIQY). N-linked (GlcNAc...) asparagine glycosylation is found at Asn-277 and Asn-287. 3 N-linked (GlcNAc...) asparagine glycosylation sites follow: Asn-420, Asn-435, and Asn-442. An N-linked (GlcNAc...) asparagine glycan is attached at Asn-489. N-linked (GlcNAc...) asparagine glycosylation is found at Asn-522, Asn-554, and Asn-561. The LRR 20; degenerate repeat unit spans residues 597 to 613 (LGSYNNFTGYIPPSICG). Asn-602 carries N-linked (GlcNAc...) asparagine glycosylation. 10 LRR repeats span residues 614-637 (LANP…CLEA), 639-663 (MSSL…FMNA), 665-687 (VLSS…LAGC), 689-710 (ALEI…WLNS), 711-737 (LPKL…VWFG), 739-762 (PLLR…YFMN), 803-827 (LTKY…VGIL), 828-851 (KELH…LANL), 852-875 (TNLE…LGTL), and 877-900 (SLEW…QFHR). N-linked (GlcNAc...) asparagine glycosylation is present at Asn-649. A glycan (N-linked (GlcNAc...) asparagine) is linked at Asn-701. The N-linked (GlcNAc...) asparagine glycan is linked to Asn-762. Residues Asn-834 and Asn-850 are each glycosylated (N-linked (GlcNAc...) asparagine). N-linked (GlcNAc...) asparagine glycans are attached at residues Asn-882 and Asn-902. The helical transmembrane segment at 947-967 (LISWIAACLGFAPGMVFGLTM) threads the bilayer. Over 968 to 994 (GYIMTSHKHEWFMDTFGRRKGRSTRTR) the chain is Cytoplasmic.

It belongs to the RLP family.

The protein localises to the cell membrane. In Arabidopsis thaliana (Mouse-ear cress), this protein is Receptor-like protein 6.